The primary structure comprises 715 residues: Interferon-induced GTP-binding protein Mx2 (715 aa).

The 273-residue stretch at 115–387 folds into the Dynamin-type G domain; sequence DLALPAIAVI…LIMHIQKSLP (273 aa). The segment at 125-132 is G1 motif; the sequence is GDQSSGKS. 125-132 is a GTP binding site; it reads GDQSSGKS. The tract at residues 150-152 is G2 motif; the sequence is VTR. Positions 225 to 228 are G3 motif; that stretch reads DLPG. GTP-binding positions include 225–229 and 294–297; these read DLPGI and TKPD. The G4 motif stretch occupies residues 294-297; it reads TKPD. The interval 326–329 is G5 motif; that stretch reads KCRG. Positions 623-714 constitute a GED domain; sequence FTEIGIHLNA…ALCQFSSKEI (92 aa).

It belongs to the TRAFAC class dynamin-like GTPase superfamily. Dynamin/Fzo/YdjA family.

Its subcellular location is the cytoplasm. It localises to the nucleus. It is found in the nuclear pore complex. Its function is as follows. Interferon-induced dynamin-like GTPase with potent antiviral activity against human immunodeficiency virus type 1 (HIV-1). Acts by targeting the viral capsid and affects the nuclear uptake and/or stability of the HIV-1 replication complex and the subsequent chromosomal integration of the proviral DNA. Exhibits antiviral activity also against simian immunodeficiency virus (SIV-mnd). May play a role in regulating nucleocytoplasmic transport and cell-cycle progression. This Homo sapiens (Human) protein is Interferon-induced GTP-binding protein Mx2 (MX2).